A 123-amino-acid chain; its full sequence is RxLR effector protein Avh262 (123 aa).

Residues Met1 to Ala18 form the signal peptide. The segment at Val24–Asn46 is disordered. The RxLR-dEER signature appears at Arg30–Arg50. Basic and acidic residues predominate over residues Lys34–Asn46. The tract at residues Leu60 to Thr82 is biP-binding.

The protein belongs to the RxLR effector family. In terms of assembly, interacts with host plant ER-luminal binding immunoglobulin proteins (BiPs) such as soybean BiP1, BiP2, BiP3 and BiP4.

The protein localises to the secreted. The protein resides in the host endoplasmic reticulum. Effector that suppresses plant defense responses during the early stages of pathogen infection. Suppresses cell death induced by effectors and PAMPs in plant hosts. Avh262 stabilizes endoplasmic reticulum (ER)-luminal binding immunoglobulin proteins (BiPs), which act as negative regulators of plant resistance to Phytophthora. By stabilizing BiPs, Avh262 suppresses ER stress-triggered cell death and facilitates Phytophthora infection. The sequence is that of RxLR effector protein Avh262 from Phytophthora sojae (Soybean stem and root rot agent).